We begin with the raw amino-acid sequence, 93 residues long: MASIAAERIDRLHTLARAAARTGDDDRAREYVRLARRLAERNRLTLPPAFRRFTCDDCDAVLVPGRNARVRTRSGHVVVTCDCGTHARYPYTG.

Residues Cys55, Cys58, Cys81, and Cys83 each contribute to the Zn(2+) site.

Belongs to the eukaryotic/archaeal RNase P protein component 4 family. In terms of assembly, consists of a catalytic RNA component and at least 4-5 protein subunits. Requires Zn(2+) as cofactor.

It localises to the cytoplasm. It carries out the reaction Endonucleolytic cleavage of RNA, removing 5'-extranucleotides from tRNA precursor.. Functionally, part of ribonuclease P, a protein complex that generates mature tRNA molecules by cleaving their 5'-ends. This Halobacterium salinarum (strain ATCC 29341 / DSM 671 / R1) protein is Ribonuclease P protein component 4.